Reading from the N-terminus, the 445-residue chain is O-fucosyltransferase 23 (445 aa).

Residues 12 to 34 (IFSKSVACKCLVLVGIALFYRAL) traverse the membrane as a helical; Signal-anchor for type II membrane protein segment. Asn-97 and Asn-179 each carry an N-linked (GlcNAc...) asparagine glycan. Substrate is bound at residue 258–260 (HMR). Residue Asn-294 is glycosylated (N-linked (GlcNAc...) asparagine). Substrate is bound at residue 374–375 (TF). The N-linked (GlcNAc...) asparagine glycan is linked to Asn-424.

This sequence belongs to the glycosyltransferase GT106 family. Expressed in dry pollen grains and germinating pollen grains.

Its subcellular location is the golgi apparatus membrane. It functions in the pathway glycan metabolism. In terms of biological role, probable protein O-fucosyltransferase required for correct pollen tube penetration through the stigma-style interface. May be involved in protein O-glycosylation events during pollen-pistil interactions. This Arabidopsis thaliana (Mouse-ear cress) protein is O-fucosyltransferase 23.